The chain runs to 396 residues: NAD(P)H oxidoreductase RTN4IP1, mitochondrial (396 aa).

Residues 1 to 40 (MGFLKTCVFRRNACTAVCFWRSQVVQKPSVRKISTTSPRS) constitute a mitochondrion transit peptide. An Enoyl reductase (ER) domain is found at 52–393 (GSNEVLRFTQ…RGHARGKTVI (342 aa)). NADPH-binding residues include Ser214, Gly216, Val217, Ser237, Tyr255, Asn276, Leu300, Ala341, Phe343, His386, Ala387, and Arg388.

This sequence belongs to the zinc-containing alcohol dehydrogenase family. Quinone oxidoreductase subfamily. As to quaternary structure, interacts with RTN4, UQCRC1 and UQCRC2.

The protein resides in the mitochondrion matrix. Its subcellular location is the mitochondrion outer membrane. The enzyme catalyses a 3-demethylubiquinone + NADH + 2 H(+) = a 3-demethylubiquinol + NAD(+). It catalyses the reaction a 3-demethylubiquinone + NADPH + 2 H(+) = a 3-demethylubiquinol + NADP(+). The catalysed reaction is 3-demethylubiquinone-10 + NADH + 2 H(+) = 3-demethylubiquinol-10 + NAD(+). It carries out the reaction 3-demethylubiquinone-10 + NADPH + 2 H(+) = 3-demethylubiquinol-10 + NADP(+). Its pathway is cofactor biosynthesis; ubiquinone biosynthesis. In terms of biological role, NAD(P)H oxidoreductase involved in the ubiquinone biosynthetic pathway. Required for the O-methyltransferase activity of COQ3. Able to catalyze the oxidoreduction of 3-demethylubiquinone into 3-demethylubiquinol in vitro. However, it is unclear if 3-demethylubiquinone constitutes a substrate in vivo. May also play a role in the regulation of retinal ganglion cell (RGC) neurite outgrowth, and hence in the development of the inner retina and optic nerve. Appears to be a potent inhibitor of regeneration following spinal cord injury. In Bos taurus (Bovine), this protein is NAD(P)H oxidoreductase RTN4IP1, mitochondrial (RTN4IP1).